The following is a 391-amino-acid chain: NAD(P)H-quinone oxidoreductase subunit H, chloroplastic (391 aa).

It belongs to the complex I 49 kDa subunit family. As to quaternary structure, NDH is composed of at least 16 different subunits, 5 of which are encoded in the nucleus.

It is found in the plastid. The protein resides in the chloroplast thylakoid membrane. The enzyme catalyses a plastoquinone + NADH + (n+1) H(+)(in) = a plastoquinol + NAD(+) + n H(+)(out). The catalysed reaction is a plastoquinone + NADPH + (n+1) H(+)(in) = a plastoquinol + NADP(+) + n H(+)(out). In terms of biological role, NDH shuttles electrons from NAD(P)H:plastoquinone, via FMN and iron-sulfur (Fe-S) centers, to quinones in the photosynthetic chain and possibly in a chloroplast respiratory chain. The immediate electron acceptor for the enzyme in this species is believed to be plastoquinone. Couples the redox reaction to proton translocation, and thus conserves the redox energy in a proton gradient. The chain is NAD(P)H-quinone oxidoreductase subunit H, chloroplastic from Physcomitrium patens (Spreading-leaved earth moss).